A 386-amino-acid polypeptide reads, in one-letter code: S-adenosylmethionine:tRNA ribosyltransferase-isomerase (386 aa).

This sequence belongs to the QueA family. Monomer.

The protein localises to the cytoplasm. The enzyme catalyses 7-aminomethyl-7-carbaguanosine(34) in tRNA + S-adenosyl-L-methionine = epoxyqueuosine(34) in tRNA + adenine + L-methionine + 2 H(+). The protein operates within tRNA modification; tRNA-queuosine biosynthesis. In terms of biological role, transfers and isomerizes the ribose moiety from AdoMet to the 7-aminomethyl group of 7-deazaguanine (preQ1-tRNA) to give epoxyqueuosine (oQ-tRNA). This chain is S-adenosylmethionine:tRNA ribosyltransferase-isomerase, found in Rickettsia canadensis (strain McKiel).